We begin with the raw amino-acid sequence, 683 residues long: Synaptic vesicle glycoprotein 2B (683 aa).

The span at methionine 1–tyrosine 10 shows a compositional bias: basic and acidic residues. The disordered stretch occupies residues methionine 1–aspartate 72. Residues methionine 1–threonine 110 are Cytoplasmic-facing. Position 33 is a phosphoserine (serine 33). At threonine 36 the chain carries Phosphothreonine. The helical transmembrane segment at leucine 111–phenylalanine 131 threads the bilayer. The Extracellular segment spans residues alanine 132–glycine 148. Residues methionine 149 to alanine 169 form a helical membrane-spanning segment. Residues aspartate 170–leucine 182 lie on the Cytoplasmic side of the membrane. A helical membrane pass occupies residues alanine 183–phenylalanine 203. At cysteine 204–arginine 205 the chain is on the extracellular side. Residues leucine 206–phenylalanine 226 form a helical membrane-spanning segment. Over leucine 227 to serine 237 the chain is Cytoplasmic. Residues tryptophan 238–isoleucine 258 traverse the membrane as a helical segment. The Extracellular segment spans residues proline 259–arginine 277. A helical membrane pass occupies residues valine 278–proline 298. Topologically, residues glutamate 299–threonine 390 are cytoplasmic. A helical transmembrane segment spans residues leucine 391–phenylalanine 411. Topologically, residues proline 412–aspartate 535 are extracellular. Tyrosine 423 carries the post-translational modification Phosphotyrosine. 3 N-linked (GlcNAc...) asparagine glycosylation sites follow: asparagine 441, asparagine 491, and asparagine 516. The chain crosses the membrane as a helical span at residues phenylalanine 536–serine 556. Residues alanine 557 to arginine 565 are Cytoplasmic-facing. A helical membrane pass occupies residues leucine 566–glycine 586. Residues asparagine 587–methionine 592 lie on the Extracellular side of the membrane. A helical membrane pass occupies residues isoleucine 593–isoleucine 613. Topologically, residues threonine 614 to alanine 626 are cytoplasmic. Residues phenylalanine 627 to valine 649 form a helical membrane-spanning segment. Residues glycine 650–lysine 653 are Extracellular-facing. A helical membrane pass occupies residues valine 654–leucine 672. Over arginine 673–methionine 683 the chain is Cytoplasmic.

Belongs to the major facilitator superfamily. As to quaternary structure, interacts with SYT1 in a calcium-independent manner. Forms a complex with SYT1, syntaxin-1 and SNAP25. In terms of assembly, (Microbial infection) Interacts with C.botulinum neurotoxin type A1 and type A2 (BoNT/A, botA). Interaction is improved by glycosylation of SV2. (Microbial infection) Interacts with C.botulinum neurotoxin type D (BoNT/D, botD). As to quaternary structure, (Microbial infection) Interacts with C.botulinum neurotoxin type E (BoNT/E). Interaction requires glycosylation of SV2 proteins. In terms of assembly, (Microbial infection) Interacts with C.botulinum neurotoxin type F (BoNT/F). Interaction requires glycosylation of SV2 proteins. N-glycosylated. In terms of processing, the N-terminal cytoplasmic domain is phosphorylated by CK1. As to expression, widely expressed throughout the brain. Specifically expressed by pinealocytes in the pineal gland. Also detected in testis (at protein level). Specifically expressed in neural tissues. Expressed in the spinal cord and in all brain regions with a stronger expression in hippocampus and cortex.

Its subcellular location is the cytoplasmic vesicle. It localises to the secretory vesicle. The protein localises to the synaptic vesicle membrane. It is found in the acrosome. Its function is as follows. Probably plays a role in the control of regulated secretion in neural and endocrine cells. Functionally, (Microbial infection) Receptor for C.botulinum neurotoxin type A (BoNT/A, botA); the toxin binds via extracellular loop 4. Restores uptake of BoNT/A in mouse and rat cells that are deleted for SV2 receptor. Glycosylation of SV2B is not essential for receptor activity, but enhances the interaction. Also serves as a receptor for the closely related C.botulinum neurotoxin type A2; glycosylation is not essential but enhances the interaction. (Microbial infection) Possible receptor for C.botulinum neurotoxin type D (BoNT/D, botD); BoNT/D does not bind to extracellular loop 4 as do BoNT/A and BoNT/E. Another group does not find a convincing interaction with SV2. In terms of biological role, (Microbial infection) Receptor for C.botulinum neurotoxin type E (BoNT/E); the toxin probably binds via extracellular loop 4. Restores uptake of BoNT/E in mouse cells that are deleted for SV2 receptor. Glycosylation of SV2B is not essential for receptor activity, but enhances the interaction. Its function is as follows. (Microbial infection) Receptor for C.botulinum neurotoxin type F (BoNT/F); binding requires glycosylation of this protein. The chain is Synaptic vesicle glycoprotein 2B (Sv2b) from Rattus norvegicus (Rat).